A 153-amino-acid chain; its full sequence is Large ribosomal subunit protein uL13 (153 aa).

Belongs to the universal ribosomal protein uL13 family. In terms of assembly, part of the 50S ribosomal subunit.

Functionally, this protein is one of the early assembly proteins of the 50S ribosomal subunit, although it is not seen to bind rRNA by itself. It is important during the early stages of 50S assembly. The chain is Large ribosomal subunit protein uL13 from Methylobacterium nodulans (strain LMG 21967 / CNCM I-2342 / ORS 2060).